The primary structure comprises 336 residues: Casein kinase I isoform beta (336 aa).

Positions Tyr17–Phe285 constitute a Protein kinase domain. Residues Ile23–Val31 and Lys46 each bind ATP. Asp136 (proton acceptor) is an active-site residue. Positions Ala309 to Gln320 are enriched in low complexity. The disordered stretch occupies residues Ala309–Ser336. A compositionally biased stretch (basic and acidic residues) spans Asp327 to Ser336.

The protein belongs to the protein kinase superfamily. CK1 Ser/Thr protein kinase family. Casein kinase I subfamily. Monomer.

The protein resides in the cytoplasm. It catalyses the reaction L-seryl-[protein] + ATP = O-phospho-L-seryl-[protein] + ADP + H(+). The catalysed reaction is L-threonyl-[protein] + ATP = O-phospho-L-threonyl-[protein] + ADP + H(+). Functionally, casein kinases are operationally defined by their preferential utilization of acidic proteins such as caseins as substrates. It can phosphorylate a large number of proteins. Participates in Wnt signaling. This is Casein kinase I isoform beta (CSNK1B) from Bos taurus (Bovine).